A 426-amino-acid polypeptide reads, in one-letter code: Serine hydroxymethyltransferase (426 aa).

(6S)-5,6,7,8-tetrahydrofolate contacts are provided by residues Leu-118 and 122–124; that span reads GHL. Lys-227 carries the post-translational modification N6-(pyridoxal phosphate)lysine.

It belongs to the SHMT family. Homodimer. Pyridoxal 5'-phosphate is required as a cofactor.

It localises to the cytoplasm. It carries out the reaction (6R)-5,10-methylene-5,6,7,8-tetrahydrofolate + glycine + H2O = (6S)-5,6,7,8-tetrahydrofolate + L-serine. It functions in the pathway one-carbon metabolism; tetrahydrofolate interconversion. The protein operates within amino-acid biosynthesis; glycine biosynthesis; glycine from L-serine: step 1/1. Functionally, catalyzes the reversible interconversion of serine and glycine with tetrahydrofolate (THF) serving as the one-carbon carrier. This reaction serves as the major source of one-carbon groups required for the biosynthesis of purines, thymidylate, methionine, and other important biomolecules. Also exhibits THF-independent aldolase activity toward beta-hydroxyamino acids, producing glycine and aldehydes, via a retro-aldol mechanism. This is Serine hydroxymethyltransferase from Mycolicibacterium paratuberculosis (strain ATCC BAA-968 / K-10) (Mycobacterium paratuberculosis).